The primary structure comprises 91 residues: N(2)-fixation sustaining protein CowN (91 aa).

It belongs to the CowN family.

In terms of biological role, is required to sustain N(2)-dependent growth in the presence of low levels of carbon monoxide (CO). Probably acts by protecting the N(2) fixation ability of the nitrogenase complex, which is inactivated in the presence of CO. In Beijerinckia indica subsp. indica (strain ATCC 9039 / DSM 1715 / NCIMB 8712), this protein is N(2)-fixation sustaining protein CowN.